Reading from the N-terminus, the 675-residue chain is G-protein coupled receptor moody (675 aa).

Residues 1–44 (MSDETTGSLGDAFSPMDTPTTTIMPPPADVDESGFSHSLLTFAA) are Extracellular-facing. Residues 45-65 (VMTFLIMIVGICGNLLTVVAL) form a helical membrane-spanning segment. The Cytoplasmic segment spans residues 66-73 (LKCPKVRN). A helical membrane pass occupies residues 74-94 (VAAAFIISLCIADLLFCALVL). The Extracellular segment spans residues 95-115 (PFQGLRFVQGTWRHGEVLCRL). A disulfide bridge connects residues Cys113 and Cys192. A helical transmembrane segment spans residues 116–136 (IPFIQYGNIGVSLLCIAMITI). At 137 to 156 (NRYVMITHYSLYNRIYKRHW) the chain is on the cytoplasmic side. A helical membrane pass occupies residues 157-177 (IAIMIAACWLFSYGMQLPTLL). The Extracellular portion of the chain corresponds to 178–206 (GAWGRFGYDARLQTCSIMSDRHGHSSKTT). Residues 207–227 (LFITAFVIPCLVIIACYAKIF) form a helical membrane-spanning segment. Residues 228–327 (WVVHKSEQRL…AKRNEWRITK (100 aa)) lie on the Cytoplasmic side of the membrane. Residues 258–316 (TSMPSGDGANPSQVPAGCRVSSDSSSNYSTDVPDTTPGGAGGGAGVKQQPSRVKDQREV) are disordered. Over residues 278–294 (SSDSSSNYSTDVPDTTP) the composition is skewed to low complexity. A helical transmembrane segment spans residues 328 to 348 (MVLAIFLSFVICYLPITIVKV). The Extracellular portion of the chain corresponds to 349-359 (ADKDVEHPSLH). Residues 360-380 (IFSYIMLYLSACINPIIYVIM) traverse the membrane as a helical segment. At 381–675 (NKQYRKAYKT…LMDKKKFPKD (295 aa)) the chain is on the cytoplasmic side. Disordered regions lie at residues 475 to 568 (SKSS…GNGS) and 588 to 675 (LPPT…FPKD). The span at 536-551 (SSVISANPSSSPSPSS) shows a compositional bias: low complexity. The span at 552-565 (SGGGIYRPGIGSMG) shows a compositional bias: gly residues. Basic and acidic residues predominate over residues 666-675 (LMDKKKFPKD).

It belongs to the G-protein coupled receptor 1 family.

The protein resides in the cell membrane. Required in glia to regulate the acute sensitivity to cocaine and to continuously maintain the proper blood-brain barrier (BBB) function. A moody-mediated signaling pathway functions in glia to regulate nervous system insulation and drug-related behaviors. This Drosophila pseudoobscura pseudoobscura (Fruit fly) protein is G-protein coupled receptor moody.